Here is a 264-residue protein sequence, read N- to C-terminus: tRNA pseudouridine synthase A (264 aa).

The active-site Nucleophile is the aspartate 52. Residue tyrosine 110 participates in substrate binding.

This sequence belongs to the tRNA pseudouridine synthase TruA family. Homodimer.

The catalysed reaction is uridine(38/39/40) in tRNA = pseudouridine(38/39/40) in tRNA. Formation of pseudouridine at positions 38, 39 and 40 in the anticodon stem and loop of transfer RNAs. The polypeptide is tRNA pseudouridine synthase A (Wigglesworthia glossinidia brevipalpis).